A 226-amino-acid polypeptide reads, in one-letter code: MGAERVGRAPGVNAKRAVQTQGVQSPSVKRSVRWVRGLCEVLLFSGVFVSAVSFLLHSAAVPPPERQVVPAHFERIAMQFPRQVSQGACAMATFSLVALQEKDKAHTEVHLVLRTPAGKEAKTVRAFALPPKGIAQLGTDAATAGVSRAGSQDVTHVALLGISIFWEPGDWMLEAQVRVPGGKPYVRRAPLRIEKKEFPREELRLDRKNTAIAQDKSERKKVQRDA.

2 disordered regions span residues 1–20 (MGAERVGRAPGVNAKRAVQT) and 205–226 (LDRKNTAIAQDKSERKKVQRDA).

This is an uncharacterized protein from Treponema pallidum (strain Nichols).